The following is a 390-amino-acid chain: Chorismate synthase (390 aa).

NADP(+) contacts are provided by Arg39 and Arg45. FMN contacts are provided by residues 132–134, 253–254, Gly298, 313–317, and Arg339; these read RSS, NA, and KPIPT.

Belongs to the chorismate synthase family. As to quaternary structure, homotetramer. The cofactor is FMNH2.

The catalysed reaction is 5-O-(1-carboxyvinyl)-3-phosphoshikimate = chorismate + phosphate. Its pathway is metabolic intermediate biosynthesis; chorismate biosynthesis; chorismate from D-erythrose 4-phosphate and phosphoenolpyruvate: step 7/7. In terms of biological role, catalyzes the anti-1,4-elimination of the C-3 phosphate and the C-6 proR hydrogen from 5-enolpyruvylshikimate-3-phosphate (EPSP) to yield chorismate, which is the branch point compound that serves as the starting substrate for the three terminal pathways of aromatic amino acid biosynthesis. This reaction introduces a second double bond into the aromatic ring system. The polypeptide is Chorismate synthase (Bacillus cytotoxicus (strain DSM 22905 / CIP 110041 / 391-98 / NVH 391-98)).